We begin with the raw amino-acid sequence, 862 residues long: Fork head protein homolog 2 (862 aa).

Residues 83–152 form the FHA domain; it reads VSIGRNTDPL…NGAKVNFQRT (70 aa). The segment at residues 339–430 is a DNA-binding region (fork-head); that stretch reads VKPPHSYATM…QQEFLNKWNT (92 aa). Disordered stretches follow at residues 498–528, 611–663, 698–730, and 750–846; these read PSKGNLPASQQSQPPVSHQNQSQQPPPQEQR, SDSA…GTTT, PERGSANRARSPLHSNSNNTNNNGANNSNLQTS, and ESNN…ANAK. Positions 504–520 are enriched in low complexity; the sequence is PASQQSQPPVSHQNQSQ. Over residues 611–644 the composition is skewed to polar residues; that stretch reads SDSADKSTNNNGGTKMNLPAISTSSLDENGNLEP. The span at 645-655 shows a compositional bias: low complexity; the sequence is TTTTSSGNSNS. A Phosphoserine modification is found at serine 708. Positions 712–726 are enriched in low complexity; it reads SNSNNTNNNGANNSN. Composition is skewed to polar residues over residues 750–770 and 778–788; these read ESNNDNRRLTPSTSKSQNVKS and LQFSSTNNTPA. Residues 804-829 are compositionally biased toward basic and acidic residues; that stretch reads IKAKENENATSEKDSDSNSNDLETKD. Polar residues predominate over residues 830 to 844; the sequence is INSSPLKNQGGSTAN. Phosphoserine occurs at positions 832 and 833.

Interacts with MCM1. Interacts with NDD1. Interacts with the origin recognition complex (ORC) composed of ORC1 to ORC6.

The protein localises to the nucleus. It localises to the cytoplasm. It is found in the cytosol. Its function is as follows. Transcription factor that regulates the expression of the CLB2 cluster of genes during the G2/M phase of the mitotic cell cycle. The CLB2 cluster of genes includes mitotic regulators such as CLB1, CLB2, CDC5 and CDC20 as well as SWI5 and ACE2, transcription factors required for the subsequent temporal wave of cell cycle regulated gene expression in the M/G1 phase interval. Involved in HMRa silencing. FKH1 and FKH2 associate with the coding regions of active genes and influence, in opposing ways, transcriptional elongation and termination, and coordinate early transcription elongation and pre-mRNA processing. Both FKH1 and FKH2 play a role as regulators of lifespan in collaboration with the anaphase-promoting complex (APC), likely through combined regulation of stress response, genomic stability, and cell cycle regulation. FKH1 and FKH2 function also in controlling yeast cell morphology by preventing preudohyphal growth. Acts as a rate-limiting replication origin activator via its interaction with the origin recognition complex (ORC). In Saccharomyces cerevisiae (strain ATCC 204508 / S288c) (Baker's yeast), this protein is Fork head protein homolog 2.